Consider the following 591-residue polypeptide: PE-PGRS family protein PE_PGRS5 (591 aa).

The PE domain occupies Met1–Ala93. The tract at residues Asn94–Gly591 is PGRS. Gly residues-rich tracts occupy residues Gly303–Gly324, Ala336–Ser363, Gly371–Gly412, Ser477–Gly491, Ala539–Gly567, and Gly579–Gly591. Disordered regions lie at residues Gly303–Gly412, Gly468–Gly491, and Ala539–Gly591.

This sequence belongs to the mycobacterial PE family. PGRS subfamily. As to quaternary structure, interacts with human TLR4.

The protein localises to the host endoplasmic reticulum. Its function is as follows. Involved in endoplasmic reticulum (ER) stress-mediated apoptosis through human Toll-like receptor 4 (TLR4) signaling pathway. Localizes to the host ER, leading to ER stress, disruption of intracellular Ca(2+) homeostasis and increase of nitric oxide (NO) and reactive oxygen species (ROS) levels. Stress response results in caspase-8 activation and apoptosis of macrophage cells. Apoptosis may lead to dissemination of the bacteria, thereby spreading the disease. This chain is PE-PGRS family protein PE_PGRS5, found in Mycobacterium tuberculosis (strain ATCC 25618 / H37Rv).